Here is a 631-residue protein sequence, read N- to C-terminus: 1-deoxy-D-xylulose-5-phosphate synthase (631 aa).

Thiamine diphosphate-binding positions include histidine 78 and 119-121; that span reads AHS. Residue aspartate 150 coordinates Mg(2+). Thiamine diphosphate is bound by residues 151–152, asparagine 179, tyrosine 286, and glutamate 368; that span reads GA. A Mg(2+)-binding site is contributed by asparagine 179.

It belongs to the transketolase family. DXPS subfamily. As to quaternary structure, homodimer. Mg(2+) is required as a cofactor. It depends on thiamine diphosphate as a cofactor.

It carries out the reaction D-glyceraldehyde 3-phosphate + pyruvate + H(+) = 1-deoxy-D-xylulose 5-phosphate + CO2. The protein operates within metabolic intermediate biosynthesis; 1-deoxy-D-xylulose 5-phosphate biosynthesis; 1-deoxy-D-xylulose 5-phosphate from D-glyceraldehyde 3-phosphate and pyruvate: step 1/1. In terms of biological role, catalyzes the acyloin condensation reaction between C atoms 2 and 3 of pyruvate and glyceraldehyde 3-phosphate to yield 1-deoxy-D-xylulose-5-phosphate (DXP). This is 1-deoxy-D-xylulose-5-phosphate synthase from Verminephrobacter eiseniae (strain EF01-2).